Consider the following 178-residue polypeptide: ATP-dependent protease subunit HslV (178 aa).

T7 is an active-site residue. G162, C165, and T168 together coordinate Na(+).

The protein belongs to the peptidase T1B family. HslV subfamily. In terms of assembly, a double ring-shaped homohexamer of HslV is capped on each side by a ring-shaped HslU homohexamer. The assembly of the HslU/HslV complex is dependent on binding of ATP.

It localises to the cytoplasm. The catalysed reaction is ATP-dependent cleavage of peptide bonds with broad specificity.. With respect to regulation, allosterically activated by HslU binding. In terms of biological role, protease subunit of a proteasome-like degradation complex believed to be a general protein degrading machinery. The chain is ATP-dependent protease subunit HslV from Cupriavidus taiwanensis (strain DSM 17343 / BCRC 17206 / CCUG 44338 / CIP 107171 / LMG 19424 / R1) (Ralstonia taiwanensis (strain LMG 19424)).